A 363-amino-acid chain; its full sequence is NAD(P)H-quinone oxidoreductase subunit 1, chloroplastic (363 aa).

8 consecutive transmembrane segments (helical) span residues 30–50 (LFPI…IVWL), 98–118 (FSIG…VIPF), 127–147 (LSIG…GLLM), 165–185 (AAQS…ISLL), 203–223 (FWGW…ISSL), 248–268 (YSGI…LVSS), 300–320 (VFGT…FLFI), and 336–356 (LLNL…LLTT).

Belongs to the complex I subunit 1 family. In terms of assembly, NDH is composed of at least 16 different subunits, 5 of which are encoded in the nucleus.

The protein localises to the plastid. It is found in the chloroplast thylakoid membrane. It carries out the reaction a plastoquinone + NADH + (n+1) H(+)(in) = a plastoquinol + NAD(+) + n H(+)(out). It catalyses the reaction a plastoquinone + NADPH + (n+1) H(+)(in) = a plastoquinol + NADP(+) + n H(+)(out). Functionally, NDH shuttles electrons from NAD(P)H:plastoquinone, via FMN and iron-sulfur (Fe-S) centers, to quinones in the photosynthetic chain and possibly in a chloroplast respiratory chain. The immediate electron acceptor for the enzyme in this species is believed to be plastoquinone. Couples the redox reaction to proton translocation, and thus conserves the redox energy in a proton gradient. This Nicotiana tomentosiformis (Tobacco) protein is NAD(P)H-quinone oxidoreductase subunit 1, chloroplastic.